A 1121-amino-acid polypeptide reads, in one-letter code: Potassium channel subfamily U member 1 (1121 aa).

Residues 1–24 are Extracellular-facing; the sequence is MSQTLLDSLNQKELTETSCTIEIQ. The helical transmembrane segment at 25–45 threads the bilayer; sequence AAFILSSLATFFGGLIILFLF. At 46-101 the chain is on the cytoplasmic side; sequence RIALKSSRSWKYVKGPRGLLELFSSRRIEANPLRKLYFHGVFRQRIEMLLSAQTVV. A helical transmembrane segment spans residues 102 to 122; sequence GQVLVILVFVLSIGSLVIYFI. Residues 123-137 lie on the Extracellular side of the membrane; sequence NSMDPVRRCSSYEDK. Residues 138–158 form a helical membrane-spanning segment; sequence IVHVDLSFNAFFSFYFGLRFW. Over 159–165 the chain is Cytoplasmic; sequence AAEDKIK. Residues 166–186 form a helical membrane-spanning segment; the sequence is FWLEMNSIVDIFTIPPTFISY. Residues 187–188 lie on the Extracellular side of the membrane; the sequence is YL. A helical; Voltage-sensor membrane pass occupies residues 189–209; the sequence is KSNWLGLRFLRALRLLELPKI. The Cytoplasmic segment spans residues 210–226; sequence LQILQVIKTSNSVKLSK. The helical transmembrane segment at 227–247 threads the bilayer; it reads LLSIVISTWFTAAGFLHLVEN. Topologically, residues 248 to 259 are extracellular; it reads SGDPWLNGRNSQ. The pore-forming intramembrane region spans 260 to 282; that stretch reads TMSYFESIYLVTATMSTVGFGDV. A Selectivity for potassium motif is present at residues 276 to 279; sequence TVGF. Over 283-290 the chain is Extracellular; the sequence is VAKTSLGR. Residues 291–311 form a helical membrane-spanning segment; the sequence is IFIVFFTLGSLILFANYIPEM. Residues 312 to 1121 are Cytoplasmic-facing; it reads VELFSTRKKY…LDASDIVQEK (810 aa). RCK N-terminal domains follow at residues 331-473 and 718-889; these read KKFI…DNIL and QNHI…DGML. Disordered stretches follow at residues 836-858 and 1052-1076; these read SPTP…KERK and DSSP…GSNF.

The protein belongs to the potassium channel family. Calcium-activated (TC 1.A.1.3) subfamily. KCa5.1/KCNU1 sub-subfamily. In terms of assembly, homotetramer; which constitutes the calcium-activated potassium channel. Interact with LRRC52; this interaction changes some channel gating properties, such as shifting gating to more negative potentials at a given pH. As to expression, testis-specific. Mainly expressed in spermatocytes. In terms of tissue distribution, expressed in testis, brain, eye and kidney.

It is found in the cell membrane. The protein resides in the cytoplasm. It carries out the reaction K(+)(in) = K(+)(out). Its activity is regulated as follows. Regulated by changes in cytosolic pH; activated by alkalization. In contrast to human KCNU1 is not activated by Ca(2+) or Mg(2+). The auxiliary subunit LRRC52 shifts the activation of KCNU1 to more negative potentials at a given pH. In terms of biological role, testis-specific potassium channel activated by both intracellular pH and membrane voltage that mediates export of K(+). Represents the primary spermatozoan K(+) current. The channel underlies a pH-triggered membrane hyperpolarization during the process of sperm capacitation, as sperm encounter the alkaline environment near the ovum in the female reproductive tract, thereby playing an essential for male fertility. This chain is Potassium channel subfamily U member 1 (Kcnu1), found in Mus musculus (Mouse).